A 327-amino-acid chain; its full sequence is Flap endonuclease 1 (327 aa).

The interval 1-98 (MGVKLKDIIQ…ETIDQRRQTR (98 aa)) is N-domain. 7 residues coordinate Mg(2+): Asp-27, Asp-80, Glu-152, Glu-154, Asp-173, Asp-175, and Asp-226. The tract at residues 116 to 246 (EARKYAMRSS…KTALKLAKKG (131 aa)) is I-domain. The segment at 319–327 (SQKSLEDWF) is interaction with PCNA.

The protein belongs to the XPG/RAD2 endonuclease family. FEN1 subfamily. Interacts with PCNA. PCNA stimulates the nuclease activity without altering cleavage specificity. The cofactor is Mg(2+).

Functionally, structure-specific nuclease with 5'-flap endonuclease and 5'-3' exonuclease activities involved in DNA replication and repair. During DNA replication, cleaves the 5'-overhanging flap structure that is generated by displacement synthesis when DNA polymerase encounters the 5'-end of a downstream Okazaki fragment. Binds the unpaired 3'-DNA end and kinks the DNA to facilitate 5' cleavage specificity. Cleaves one nucleotide into the double-stranded DNA from the junction in flap DNA, leaving a nick for ligation. Also involved in the base excision repair (BER) pathway. Acts as a genome stabilization factor that prevents flaps from equilibrating into structures that lead to duplications and deletions. Also possesses 5'-3' exonuclease activity on nicked or gapped double-stranded DNA. The chain is Flap endonuclease 1 from Methanobrevibacter smithii (strain ATCC 35061 / DSM 861 / OCM 144 / PS).